The following is a 1035-amino-acid chain: POM121-like protein 2 (1035 aa).

Disordered stretches follow at residues 1–37, 177–213, 286–343, 415–508, 754–791, and 972–1035; these read MGSF…PLHQ, LFPE…PRPG, IKKE…LGYA, LGPL…QSTL, SPLG…QPAL, and NTPV…AYKK. The span at 27–37 shows a compositional bias: basic residues; sequence TKRRPPQPLHQ. The span at 309-319 shows a compositional bias: low complexity; it reads GGSESSGQQNQ. Polar residues-rich tracts occupy residues 320–330, 420–431, and 445–462; these read KIPQLPSSPEN, SPQSTGEATSVA, and GCSQ…SKPT. A compositionally biased stretch (low complexity) spans 464 to 481; the sequence is TFILLTPTSPTLPVTDTT. Over residues 493-502 the composition is skewed to pro residues; it reads PMPPDPPAPP. Low complexity predominate over residues 1000–1016; the sequence is RGPFRSSASSFSIGAKS. The segment covering 1017–1035 has biased composition (basic residues); it reads KTPKNREKGHSRRHHAYKK.

It belongs to the POM121 family.

This Homo sapiens (Human) protein is POM121-like protein 2 (POM121L2).